A 229-amino-acid chain; its full sequence is C-&gt;U-editing enzyme APOBEC-1 (229 aa).

Residues 10 to 134 (VDPTLRRRIE…QRNRQGLRDL (125 aa)) form the CMP/dCMP-type deaminase domain. H61 is a binding site for Zn(2+). Catalysis depends on E63, which acts as the Proton donor. Residues C93 and C96 each contribute to the Zn(2+) site.

It belongs to the cytidine and deoxycytidylate deaminase family. Homodimer. Interacts with A1CF; form an mRNA editing complex. Interacts with RBM47; form an mRNA editing complex. Found in a complex with CELF2/CUGBP2 and A1CF. Interacts with HNRPAB. Interacts with SYNCRIP. Zn(2+) serves as cofactor. Expressed in the spleen. Expressed at lower level in the kidney, testis, lung, brain and liver.

Its subcellular location is the cytoplasm. The protein localises to the nucleus. The catalysed reaction is a cytidine in mRNA + H2O + H(+) = a uridine in mRNA + NH4(+). It catalyses the reaction cytidine(6666) in apoB mRNA + H2O + H(+) = uridine(6666) in apoB mRNA + NH4(+). Its function is as follows. Cytidine deaminase catalyzing the cytidine to uridine postranscriptional editing of a variety of mRNAs. Form complexes with cofactors that confer differential editing activity and selectivity. Responsible for the postranscriptional editing of a CAA codon for Gln to a UAA codon for stop in the apolipoprotein B mRNA. Also involved in CGA (Arg) to UGA (Stop) editing in the NF1 mRNA. May also play a role in the epigenetic regulation of gene expression by participating in DNA demethylation. The sequence is that of C-&gt;U-editing enzyme APOBEC-1 from Mus musculus (Mouse).